The sequence spans 332 residues: Endo-1,4-beta-xylanase B (332 aa).

The GH10 domain occupies 2–331 (STEIPSLSAS…KDSFWRIIGQ (330 aa)). Residue Glu-134 is the Proton donor of the active site. Glu-241 acts as the Nucleophile in catalysis.

It belongs to the glycosyl hydrolase 10 (cellulase F) family. Cytoplasmic xylanase subfamily.

Its subcellular location is the cytoplasm. It catalyses the reaction Endohydrolysis of (1-&gt;4)-beta-D-xylosidic linkages in xylans.. It functions in the pathway glycan degradation; xylan degradation. Completely inhibited by Ag(2+), Cu(2+), Hg(2+), Mn(2+), Pb(2+) and Sn(2+). Strongly inhibited by Fe(2+) and Zn(2+). Co(2+) and Ni(2+) cause little inhibition while Ca(2+) and Mg(2+) do not affect enzyme activity, and Ba(2+) produces a small stimulating effect. Irreversibly inactivated by SDS in vitro. In terms of biological role, plays a role in plant xylan biodegradation, probably via the hydrolysis of short xylooligosaccharides resulting from extracellular xylan hydrolysis, once they have been transported inside cells. Shows similar activity on xylans of different rate of arabinose or methylglucuronic substitution. Also displays high activity on aryl-xylosides. Is active on xylotetraose and xylotriose, but does not hydrolyze xylobiose, indicating that XynB is a xylanase and not a beta-xylosidase. This chain is Endo-1,4-beta-xylanase B (xynB), found in Paenibacillus barcinonensis.